A 209-amino-acid chain; its full sequence is Ubiquitin-conjugating enzyme E2 S (209 aa).

The UBC core domain occupies 14 to 160; sequence QTIRQVMREL…ARMMTEIHAQ (147 aa). C98 functions as the Glycyl thioester intermediate in the catalytic mechanism. The disordered stretch occupies residues 168 to 194; sequence AVGDAKDDGGPSTKKHAGLDKKLQDKK. Basic and acidic residues predominate over residues 184–194; the sequence is AGLDKKLQDKK.

The protein belongs to the ubiquitin-conjugating enzyme family.

The catalysed reaction is S-ubiquitinyl-[E1 ubiquitin-activating enzyme]-L-cysteine + [E2 ubiquitin-conjugating enzyme]-L-cysteine = [E1 ubiquitin-activating enzyme]-L-cysteine + S-ubiquitinyl-[E2 ubiquitin-conjugating enzyme]-L-cysteine.. It functions in the pathway protein modification; protein ubiquitination. In terms of biological role, catalyzes the covalent attachment of ubiquitin to other proteins. Acts as an essential factor of the anaphase promoting complex/cyclosome (APC/C), a cell cycle-regulated ubiquitin ligase that controls progression through mitosis. Acts by specifically elongating polyubiquitin chains initiated by the E2 enzyme vih/UbcH10 on APC/C substrates, enhancing the degradation of APC/C substrates by the proteasome and promoting mitotic exit. This is Ubiquitin-conjugating enzyme E2 S from Drosophila melanogaster (Fruit fly).